The chain runs to 475 residues: Vitronectin (475 aa).

An N-terminal signal peptide occupies residues 1 to 19; it reads MAPLRPIFTLALLLWVVLA. In terms of domain architecture, SMB spans 20–63; that stretch reads DQESCKDRCTEGFNANRKCQCDELCSYYQSCCADYAAECKPQVT. Cystine bridges form between Cys24–Cys28, Cys24–Cys40, Cys28–Cys58, Cys38–Cys40, Cys38–Cys51, Cys44–Cys50, and Cys51–Cys58. The Cell attachment site motif lies at 64-66; sequence RGD. Thr69 carries the post-translational modification Phosphothreonine. Residues Tyr75, Tyr78, and Tyr80 each carry the sulfotyrosine modification. Asn87 carries N-linked (GlcNAc...) asparagine glycosylation. A disordered region spans residues 87–123; it reads NASVHAQPESPTVGQEPTLSPDLQTEGGAEPTHEVPL. Positions 95–109 are enriched in polar residues; that stretch reads ESPTVGQEPTLSPDL. 3 Hemopexin repeats span residues 158–202, 203–250, and 251–305; these read GKPF…VWGI, EGPI…FSGI, and PDNV…FEHF. N-linked (GlcNAc...) asparagine glycans are attached at residues Asn169 and Asn242. Sulfotyrosine occurs at positions 279 and 282. Ser312 carries the phosphoserine modification. Positions 359–391 are disordered; that stretch reads LTPSPSAKKQKSRRRSRKRYRSRYGRGRSQNSR. Basic residues predominate over residues 366–384; the sequence is KKQKSRRRSRKRYRSRYGR. Positions 366 to 392 are glycosaminoglycan binding region; the sequence is KKQKSRRRSRKRYRSRYGRGRSQNSRR. Ser394 is subject to Phosphoserine. A Hemopexin 4 repeat occupies 419–469; sequence TSWLKPATSEPIQSVYFFSGDKYYRVNLRTQRVDTVNPPYPRSIAQYWLGC.

In terms of assembly, interacts with SERPINE1/PAI1 and C1QBP. Monomer. In terms of processing, sulfated on tyrosine residues. Post-translationally, N- and O-glycosylated. It has been suggested that the active SMB domain may be permitted considerable disulfide bond heterogeneity or variability, thus two alternate disulfide patterns based on 3D structures are described with 1 disulfide bond conserved in both. Plasma.

It localises to the secreted. The protein localises to the extracellular space. Its function is as follows. Vitronectin is a cell adhesion and spreading factor found in serum and tissues. Vitronectin interact with glycosaminoglycans and proteoglycans. Is recognized by certain members of the integrin family and serves as a cell-to-substrate adhesion molecule. Inhibitor of the membrane-damaging effect of the terminal cytolytic complement pathway. This Oryctolagus cuniculus (Rabbit) protein is Vitronectin (VTN).